The sequence spans 61 residues: Copper metallothionein 1-1 (61 aa).

The propeptide occupies 1–8 (MFSELINF). Cys15, Cys17, Cys19, Cys22, and Cys28 together coordinate Cu cation. Lys30 is covalently cross-linked (Glycyl lysine isopeptide (Lys-Gly) (interchain with G-Cter in ubiquitin)). Positions 32, 34, 38, 44, and 46 each coordinate Cu cation. The interval 37–61 (GCNSDDKCPCGNKSEETKKSCCSGK) is disordered. Basic and acidic residues predominate over residues 40–55 (SDDKCPCGNKSEETKK).

The protein belongs to the metallothionein superfamily. Type 12 family.

Functionally, protects the cell against copper toxicity by tightly chelating copper ions. May also act as a depository for copper designated for the effective transfer into the apo forms of copper proteins. The protein is Copper metallothionein 1-1 (CUP1-1) of Saccharomyces cerevisiae (strain ATCC 204508 / S288c) (Baker's yeast).